Reading from the N-terminus, the 121-residue chain is uncharacterized protein (121 aa).

Transmembrane regions (helical) follow at residues valine 2–isoleucine 22, phenylalanine 42–phenylalanine 62, and isoleucine 89–phenylalanine 109.

It localises to the membrane. This is an uncharacterized protein from Saccharomyces cerevisiae (strain ATCC 204508 / S288c) (Baker's yeast).